The chain runs to 390 residues: Protein snail (390 aa).

An SNAG domain region spans residues 1-20 (MAANYKSCPLKKRPIVFVEE). 2 disordered regions span residues 29-65 (ALTK…PKRD) and 162-191 (QSVY…DLSV). Polar residues-rich tracts occupy residues 32-43 (KDSQFAQDQPQD) and 162-172 (QSVYSYQQMTP). 5 consecutive C2H2-type zinc fingers follow at residues 245-267 (FKCD…RQFH), 280-302 (HSCE…IRTH), 306-328 (CKCP…IRTH), 334-356 (FQCP…QQTH), and 362-385 (YACQ…SSNC).

Belongs to the snail C2H2-type zinc-finger protein family.

It localises to the nucleus. Essential for the correct specification of ventral-dorsal patterns. In Drosophila melanogaster (Fruit fly), this protein is Protein snail (sna).